Consider the following 364-residue polypeptide: Dimethylsulfoniopropionate demethylase DmdA (364 aa).

Belongs to the GcvT family. DmdA subfamily.

The catalysed reaction is S,S-dimethyl-beta-propiothetin + (6S)-5,6,7,8-tetrahydrofolate = 3-(methylsulfanyl)propanoate + (6S)-5-methyl-5,6,7,8-tetrahydrofolate + H(+). In terms of biological role, involved in the assimilation of dimethylsulphoniopropionate (DMSP), an important compound in the fixation of carbon in marine phytoplankton, by mediating demethylation of dimethylsulfoniopropionate (DMSP) to methyl-mercaptopropionate (MMPA). The intracellular concentration of DMSP is estimated to be 70 mM. The chain is Dimethylsulfoniopropionate demethylase DmdA from Ruegeria pomeroyi (strain ATCC 700808 / DSM 15171 / DSS-3) (Silicibacter pomeroyi).